The following is a 1221-amino-acid chain: DNA-directed RNA polymerase subunit beta' (1221 aa).

Residues Cys-60, Cys-62, Cys-75, and Cys-78 each coordinate Zn(2+). Positions 449, 451, and 453 each coordinate Mg(2+). Zn(2+) contacts are provided by Cys-821, Cys-896, Cys-903, and Cys-906.

This sequence belongs to the RNA polymerase beta' chain family. In terms of assembly, the RNAP catalytic core consists of 2 alpha, 1 beta, 1 beta' and 1 omega subunit. When a sigma factor is associated with the core the holoenzyme is formed, which can initiate transcription. It depends on Mg(2+) as a cofactor. Zn(2+) is required as a cofactor.

It catalyses the reaction RNA(n) + a ribonucleoside 5'-triphosphate = RNA(n+1) + diphosphate. Its function is as follows. DNA-dependent RNA polymerase catalyzes the transcription of DNA into RNA using the four ribonucleoside triphosphates as substrates. The protein is DNA-directed RNA polymerase subunit beta' of Lactobacillus delbrueckii subsp. bulgaricus (strain ATCC 11842 / DSM 20081 / BCRC 10696 / JCM 1002 / NBRC 13953 / NCIMB 11778 / NCTC 12712 / WDCM 00102 / Lb 14).